The following is a 283-amino-acid chain: NAD kinase (283 aa).

Asp-61 serves as the catalytic Proton acceptor. NAD(+)-binding positions include 61–62, 134–135, Arg-145, Asp-164, 175–180, and Gln-234; these read DG, ND, and TAYNLS.

This sequence belongs to the NAD kinase family. The cofactor is a divalent metal cation.

It localises to the cytoplasm. It catalyses the reaction NAD(+) + ATP = ADP + NADP(+) + H(+). Involved in the regulation of the intracellular balance of NAD and NADP, and is a key enzyme in the biosynthesis of NADP. Catalyzes specifically the phosphorylation on 2'-hydroxyl of the adenosine moiety of NAD to yield NADP. This chain is NAD kinase, found in Clostridium kluyveri (strain NBRC 12016).